The chain runs to 206 residues: Small ribosomal subunit protein uS4 (206 aa).

The disordered stretch occupies residues 15 to 46 (MGENIWGRPKSPVNKREYGPGQHGQRRKNKLS). Residues 94–157 (RRLDAIVYRA…RQLAIVLEAT (64 aa)) form the S4 RNA-binding domain.

It belongs to the universal ribosomal protein uS4 family. As to quaternary structure, part of the 30S ribosomal subunit. Contacts protein S5. The interaction surface between S4 and S5 is involved in control of translational fidelity.

In terms of biological role, one of the primary rRNA binding proteins, it binds directly to 16S rRNA where it nucleates assembly of the body of the 30S subunit. Its function is as follows. With S5 and S12 plays an important role in translational accuracy. The protein is Small ribosomal subunit protein uS4 of Cereibacter sphaeroides (strain ATCC 17025 / ATH 2.4.3) (Rhodobacter sphaeroides).